The chain runs to 463 residues: O-phospho-L-seryl-tRNA:Cys-tRNA synthase 2 (463 aa).

Pyridoxal 5'-phosphate contacts are provided by residues 154–155, Asn259, and 282–284; these read AR and SGH. Lys285 carries the post-translational modification N6-(pyridoxal phosphate)lysine.

This sequence belongs to the SepCysS family. In terms of assembly, homodimer. Interacts with SepRS. Pyridoxal 5'-phosphate serves as cofactor.

The catalysed reaction is O-phospho-L-seryl-tRNA(Cys) + hydrogen sulfide + H(+) = L-cysteinyl-tRNA(Cys) + phosphate. In terms of biological role, converts O-phospho-L-seryl-tRNA(Cys) (Sep-tRNA(Cys)) to L-cysteinyl-tRNA(Cys) (Cys-tRNA(Cys)). The protein is O-phospho-L-seryl-tRNA:Cys-tRNA synthase 2 of Methanocella arvoryzae (strain DSM 22066 / NBRC 105507 / MRE50).